The sequence spans 525 residues: G-protein regulator 2 (525 aa).

The 22-residue stretch at P424 to L445 folds into the GoLoco domain. A disordered region spans residues T489 to K525.

In terms of assembly, interacts with gpr-1; gpr-1 forms a complex with lin-5 and GDP-bound goa-1.

Its subcellular location is the cytoplasm. The protein resides in the cell cortex. It is found in the cytoskeleton. It localises to the spindle. In the 1-cell embryo, probably together with gpr-1, controls nuclear rotation and spindle elongation during mitosis. Complex of gpr-1 and gpr-2, in association with lin-5, activates G-protein signaling to affect mitotic spindle force. Polarity determinants (par genes) may regulate lin-5/gpr-1/gpr-2/goa-1 locally to create the asymmetric forces that drive spindle movement. This chain is G-protein regulator 2 (gpr-2), found in Caenorhabditis elegans.